A 457-amino-acid chain; its full sequence is uncharacterized protein (457 aa).

12 consecutive transmembrane segments (helical) span residues 18-38 (VMTV…PYLV), 44-64 (GAYV…MILV), 101-121 (MGLL…GWVI), 158-178 (IIFY…KGII), 188-208 (LMPL…TLPG), 228-248 (LFIF…GVLI), 273-293 (IIAV…GIEP), 294-314 (NAGP…LWAG), 316-336 (FFAI…SITI), 355-375 (AIVL…ILGD), 396-416 (SGNI…GFVL), and 433-453 (IKIW…VIFI).

Belongs to the sodium:neurotransmitter symporter (SNF) (TC 2.A.22) family.

The protein resides in the cell membrane. Its function is as follows. Putative sodium-dependent transporter. This is an uncharacterized protein from Haemophilus influenzae (strain ATCC 51907 / DSM 11121 / KW20 / Rd).